A 778-amino-acid chain; its full sequence is Dolichyl-phosphate-mannose--protein mannosyltransferase 4 (778 aa).

The span at 1–28 (MASKSEKAVKKAQKLSKEPSVELTDTKS) shows a compositional bias: basic and acidic residues. A disordered region spans residues 1-44 (MASKSEKAVKKAQKLSKEPSVELTDTKSSDNVTPKQKSPNSTEE). Polar residues predominate over residues 29–41 (SDNVTPKQKSPNS). N-linked (GlcNAc...) asparagine glycosylation is present at asparagine 40. 7 helical membrane passes run 60 to 80 (LAFV…LNLP), 103 to 123 (FFDL…KLAG), 145 to 165 (VTIR…VFLI), 196 to 216 (ILLD…YVRF), 223 to 243 (PFSR…SCTI), 248 to 268 (VGFF…WYLW), and 288 to 308 (FCLI…HFNI). An N-linked (GlcNAc...) asparagine glycan is attached at asparagine 335. MIR domains are found at residues 336–396 (STIL…ILPA), 408–467 (NVPV…VVMS), and 474–529 (RPLY…FDDI). 4 helical membrane-spanning segments follow: residues 608 to 628 (WWII…EILL), 644 to 664 (FYRS…PFFI), 669 to 689 (LFLH…GAFI), and 726 to 746 (VIEL…FTFF).

This sequence belongs to the glycosyltransferase 39 family.

The protein resides in the endoplasmic reticulum membrane. It carries out the reaction a di-trans,poly-cis-dolichyl beta-D-mannosyl phosphate + L-seryl-[protein] = 3-O-(alpha-D-mannosyl)-L-seryl-[protein] + a di-trans,poly-cis-dolichyl phosphate + H(+). The enzyme catalyses a di-trans,poly-cis-dolichyl beta-D-mannosyl phosphate + L-threonyl-[protein] = 3-O-(alpha-D-mannosyl)-L-threonyl-[protein] + a di-trans,poly-cis-dolichyl phosphate + H(+). It participates in protein modification; protein glycosylation. In terms of biological role, transfers mannose from Dol-P-mannose to Ser or Thr residues on proteins. Required for normal cell wall and septum formation. The chain is Dolichyl-phosphate-mannose--protein mannosyltransferase 4 (ogm4) from Schizosaccharomyces pombe (strain 972 / ATCC 24843) (Fission yeast).